Here is a 637-residue protein sequence, read N- to C-terminus: MSNWSIDDARASYNVNHWSQGLYGISDDGEVTVSPDPSRPECKIGLNEMAKDMVKSGVALPVLVRFPQILHHRVNSLCQAFNQAIQKYQYENDYLLVYPIKVNQQQTVVEEILASQVEKEVPQLGLEAGSKPELMAVLAMAQKASSVIICNGYKDKEYIRLALIGEKLGHKVYIVLEKISELKVVLEQAKELGVTPRLGLRVRLAFQGKGKWQASGGEKSKFGLSAAQVLQVITSLKQENMLDSLELLHFHLGSQIANIRDIRQGVSEAGRFYCELMKLGANVKCFDVGGGLAVDYDGTRSQSSHSMNYGLTEYANNIVSVLTDMCKEYEQPMPRIISESGRYLTAHHAVLLTDVIGTEAYKPEDIQPPAEDAPQLLHNMWQSWVEVSGKADQRALIEIFHDCQSDLTEVHSLFAVGQVGLAERAWAEQVNLRVCYELQGSMSAKYRFHRPIIDELNEKLADKFFVNFSLFQSLPDAWGIDQVFPVMPLSGLDKAPESRAVMLDITCDSDGTIDQYVDGQGIETTLPVPAWTQESPYLIGFFLVGAYQEILGDMHNLFGDTNSAVVRLDEDARTNVESVLAGDTVADVLRYVNLDAVSFMRTYEELVNKHIAEDERANILEELQLGLKGYTYLEDFS.

Lys-101 carries the post-translational modification N6-(pyridoxal phosphate)lysine. 286–296 (FDVGGGLAVDY) is a substrate binding site.

Belongs to the Orn/Lys/Arg decarboxylase class-II family. SpeA subfamily. Mg(2+) is required as a cofactor. Pyridoxal 5'-phosphate serves as cofactor.

The catalysed reaction is L-arginine + H(+) = agmatine + CO2. The protein operates within amine and polyamine biosynthesis; agmatine biosynthesis; agmatine from L-arginine: step 1/1. Its function is as follows. Catalyzes the biosynthesis of agmatine from arginine. In Shewanella halifaxensis (strain HAW-EB4), this protein is Biosynthetic arginine decarboxylase.